We begin with the raw amino-acid sequence, 152 residues long: 3-dehydroquinate dehydratase (152 aa).

Catalysis depends on Tyr-26, which acts as the Proton acceptor. Substrate-binding residues include Asn-77, His-83, and Asp-90. His-103 (proton donor) is an active-site residue. Residues 104–105 and Arg-114 contribute to the substrate site; that span reads LS.

The protein belongs to the type-II 3-dehydroquinase family. In terms of assembly, homododecamer.

The enzyme catalyses 3-dehydroquinate = 3-dehydroshikimate + H2O. The protein operates within metabolic intermediate biosynthesis; chorismate biosynthesis; chorismate from D-erythrose 4-phosphate and phosphoenolpyruvate: step 3/7. Catalyzes a trans-dehydration via an enolate intermediate. The polypeptide is 3-dehydroquinate dehydratase (Tolumonas auensis (strain DSM 9187 / NBRC 110442 / TA 4)).